A 314-amino-acid chain; its full sequence is Glycerol-3-phosphate dehydrogenase [NAD(P)+] (314 aa).

NADPH-binding residues include Phe11, Arg30, and Lys96. The sn-glycerol 3-phosphate site is built by Lys96, Gly124, and Ser126. Ala128 contributes to the NADPH binding site. Residues Lys179, Asp232, Ser242, Arg243, and Asn244 each contribute to the sn-glycerol 3-phosphate site. Lys179 functions as the Proton acceptor in the catalytic mechanism. Residue Arg243 coordinates NADPH. Residue Glu264 participates in NADPH binding.

The protein belongs to the NAD-dependent glycerol-3-phosphate dehydrogenase family.

It localises to the cytoplasm. The enzyme catalyses sn-glycerol 3-phosphate + NAD(+) = dihydroxyacetone phosphate + NADH + H(+). It carries out the reaction sn-glycerol 3-phosphate + NADP(+) = dihydroxyacetone phosphate + NADPH + H(+). It participates in membrane lipid metabolism; glycerophospholipid metabolism. Catalyzes the reduction of the glycolytic intermediate dihydroxyacetone phosphate (DHAP) to sn-glycerol 3-phosphate (G3P), the key precursor for phospholipid synthesis. This chain is Glycerol-3-phosphate dehydrogenase [NAD(P)+], found in Paracoccus denitrificans (strain Pd 1222).